We begin with the raw amino-acid sequence, 226 residues long: Transcriptional activator plp-1 (226 aa).

Belongs to the PUR DNA-binding protein family.

The protein resides in the nucleus. It localises to the chromosome. Probable transcription activator. Binds telomeric DNA containing repeats of the sequence, 5'-TTAGGC-3'. Binds to end-1 promoter, activating end-1 expression, which is required for endoderm specification during embryonic development. The polypeptide is Transcriptional activator plp-1 (Caenorhabditis elegans).